Here is a 390-residue protein sequence, read N- to C-terminus: Putative gustatory receptor 36c (390 aa).

Residues 1–4 (MDLE) are Cytoplasmic-facing. The chain crosses the membrane as a helical span at residues 5-25 (SFLLGAVYYYGLFIGLSNFEF). Topologically, residues 26 to 36 (DWNTGRVFTKK) are extracellular. A helical membrane pass occupies residues 37-57 (WSTLYAIALDSCIFALYIYHW). Residues 58–75 (TGNTNIVNAIFGRANMLH) lie on the Cytoplasmic side of the membrane. Residues 76-96 (EYVVAILTGLRIVTGLFTLIL) form a helical membrane-spanning segment. Topologically, residues 97 to 132 (RWYQRCKMMDLASKVVRMYVARPQVRRMSRWGILTK) are extracellular. Residues 133–153 (FIFGSITDGLQMAMVLSAMGS) traverse the membrane as a helical segment. Over 154–165 (VDSQFYLGLGLQ) the chain is Cytoplasmic. The chain crosses the membrane as a helical span at residues 166–186 (YWMFVILNMAMMQQHMIMLFV). Residues 187-254 (RTQFQLINTE…MEEVFGIQGA (68 aa)) are Extracellular-facing. Residues 255–275 (MTYGGYYLSSVGTCYLAYSIL) form a helical membrane-spanning segment. The Cytoplasmic segment spans residues 276–288 (KHGYENLSMTLST). Residues 289–309 (VILAYSWCFFYYLDGMLNLSV) form a helical membrane-spanning segment. The Extracellular portion of the chain corresponds to 310 to 390 (MLHVQDDYWE…FLIQYDIEHF (81 aa)).

Belongs to the insect chemoreceptor superfamily. Gustatory receptor (GR) family. Gr22e subfamily. As to expression, expressed in neurons of the terminal external chemosensory organ of larvae.

The protein resides in the cell membrane. Functionally, probable gustatory receptor which mediates acceptance or avoidance behavior, depending on its substrates. This is Putative gustatory receptor 36c (Gr36c) from Drosophila melanogaster (Fruit fly).